Here is a 186-residue protein sequence, read N- to C-terminus: Ribosome-recycling factor (186 aa).

This sequence belongs to the RRF family.

It is found in the cytoplasm. In terms of biological role, responsible for the release of ribosomes from messenger RNA at the termination of protein biosynthesis. May increase the efficiency of translation by recycling ribosomes from one round of translation to another. This chain is Ribosome-recycling factor, found in Albidiferax ferrireducens (strain ATCC BAA-621 / DSM 15236 / T118) (Rhodoferax ferrireducens).